Here is a 512-residue protein sequence, read N- to C-terminus: Cytochrome P450 72A15 (512 aa).

The chain crosses the membrane as a helical span at residues 2–22 (EISVASVTISVVLAVVSWWIW). Heme is bound at residue cysteine 460.

This sequence belongs to the cytochrome P450 family. Heme serves as cofactor.

The protein localises to the membrane. In Arabidopsis thaliana (Mouse-ear cress), this protein is Cytochrome P450 72A15 (CYP72A15).